A 330-amino-acid chain; its full sequence is Putative [LysW]-L-2-aminoadipate/[LysW]-L-glutamate phosphate reductase (330 aa).

NADP(+) contacts are provided by residues 10 to 13 and 34 to 36; these read SGYI and SRK. Cysteine 142 is an active-site residue. Residue asparagine 297 coordinates NADP(+).

This sequence belongs to the NAGSA dehydrogenase family. Type 1 subfamily. LysY sub-subfamily.

Its subcellular location is the cytoplasm. The catalysed reaction is [amino-group carrier protein]-C-terminal-N-(1-carboxy-5-oxopentan-1-yl)-L-glutamine + phosphate + NADP(+) = [amino-group carrier protein]-C-terminal-N-(1-carboxy-5-phosphooxy-5-oxopentan-1-yl)-L-glutamine + NADPH + H(+). It catalyses the reaction [amino-group carrier protein]-C-terminal-gamma-(L-glutamyl-5-semialdehyde)-L-glutamate + phosphate + NADP(+) = [amino-group carrier protein]-C-terminal-gamma-(5-phospho-L-glutamyl)-L-glutamate + NADPH + H(+). Its pathway is amino-acid biosynthesis; L-lysine biosynthesis via AAA pathway; L-lysine from L-alpha-aminoadipate (Thermus route): step 3/5. It functions in the pathway amino-acid biosynthesis; L-arginine biosynthesis. Functionally, involved in both the arginine and lysine biosynthetic pathways. The polypeptide is Putative [LysW]-L-2-aminoadipate/[LysW]-L-glutamate phosphate reductase (Pyrococcus abyssi (strain GE5 / Orsay)).